The primary structure comprises 239 residues: Small ribosomal subunit protein eS4 (239 aa).

The S4 RNA-binding domain maps to 37 to 99; the sequence is IPLAVVIRDY…ADLYFRVIPD (63 aa).

This sequence belongs to the eukaryotic ribosomal protein eS4 family.

The sequence is that of Small ribosomal subunit protein eS4 from Saccharolobus islandicus (strain Y.N.15.51 / Yellowstone #2) (Sulfolobus islandicus).